The sequence spans 240 residues: 1-(5-phosphoribosyl)-5-[(5-phosphoribosylamino)methylideneamino] imidazole-4-carboxamide isomerase (240 aa).

Asp-8 serves as the catalytic Proton acceptor. Catalysis depends on Asp-129, which acts as the Proton donor.

Belongs to the HisA/HisF family.

It is found in the cytoplasm. It catalyses the reaction 1-(5-phospho-beta-D-ribosyl)-5-[(5-phospho-beta-D-ribosylamino)methylideneamino]imidazole-4-carboxamide = 5-[(5-phospho-1-deoxy-D-ribulos-1-ylimino)methylamino]-1-(5-phospho-beta-D-ribosyl)imidazole-4-carboxamide. Its pathway is amino-acid biosynthesis; L-histidine biosynthesis; L-histidine from 5-phospho-alpha-D-ribose 1-diphosphate: step 4/9. The protein is 1-(5-phosphoribosyl)-5-[(5-phosphoribosylamino)methylideneamino] imidazole-4-carboxamide isomerase of Listeria welshimeri serovar 6b (strain ATCC 35897 / DSM 20650 / CCUG 15529 / CIP 8149 / NCTC 11857 / SLCC 5334 / V8).